The primary structure comprises 58 residues: Large ribosomal subunit protein bL32 (58 aa).

Belongs to the bacterial ribosomal protein bL32 family.

This is Large ribosomal subunit protein bL32 from Anaplasma marginale (strain Florida).